The sequence spans 354 residues: Glycerol-1-phosphate dehydrogenase [NAD(P)+] (354 aa).

NAD(+) contacts are provided by residues 103–107 (GRAVD) and 125–128 (TAAS). Substrate is bound at residue D130. S134 is an NAD(+) binding site. Residue D176 participates in substrate binding. Residues D176 and H255 each coordinate Zn(2+). H259 provides a ligand contact to substrate. H271 provides a ligand contact to Zn(2+).

The protein belongs to the glycerol-1-phosphate dehydrogenase family. In terms of assembly, homodimer. Zn(2+) serves as cofactor.

The protein localises to the cytoplasm. The catalysed reaction is sn-glycerol 1-phosphate + NAD(+) = dihydroxyacetone phosphate + NADH + H(+). The enzyme catalyses sn-glycerol 1-phosphate + NADP(+) = dihydroxyacetone phosphate + NADPH + H(+). Its pathway is membrane lipid metabolism; glycerophospholipid metabolism. Its function is as follows. Catalyzes the NAD(P)H-dependent reduction of dihydroxyacetonephosphate (DHAP or glycerone phosphate) to glycerol 1-phosphate (G1P). The G1P thus generated is used as the glycerophosphate backbone of phospholipids in the cellular membranes of Archaea. This is Glycerol-1-phosphate dehydrogenase [NAD(P)+] from Cenarchaeum symbiosum (strain A).